A 292-amino-acid chain; its full sequence is Bifunctional protein FolD (292 aa).

NADP(+)-binding positions include 166–168, Ser-191, and Ile-232; that span reads GRS.

This sequence belongs to the tetrahydrofolate dehydrogenase/cyclohydrolase family. Homodimer.

It catalyses the reaction (6R)-5,10-methylene-5,6,7,8-tetrahydrofolate + NADP(+) = (6R)-5,10-methenyltetrahydrofolate + NADPH. The catalysed reaction is (6R)-5,10-methenyltetrahydrofolate + H2O = (6R)-10-formyltetrahydrofolate + H(+). The protein operates within one-carbon metabolism; tetrahydrofolate interconversion. In terms of biological role, catalyzes the oxidation of 5,10-methylenetetrahydrofolate to 5,10-methenyltetrahydrofolate and then the hydrolysis of 5,10-methenyltetrahydrofolate to 10-formyltetrahydrofolate. The chain is Bifunctional protein FolD from Wolbachia sp. subsp. Drosophila simulans (strain wRi).